The chain runs to 233 residues: Probable 2-phosphosulfolactate phosphatase (233 aa).

This sequence belongs to the ComB family. The cofactor is Mg(2+).

The catalysed reaction is (2R)-O-phospho-3-sulfolactate + H2O = (2R)-3-sulfolactate + phosphate. The sequence is that of Probable 2-phosphosulfolactate phosphatase from Clostridium tetani (strain Massachusetts / E88).